A 263-amino-acid polypeptide reads, in one-letter code: Hydroxyethylthiazole kinase (263 aa).

Position 41 (methionine 41) interacts with substrate. 2 residues coordinate ATP: lysine 117 and serine 163. Glycine 190 serves as a coordination point for substrate.

This sequence belongs to the Thz kinase family. Mg(2+) serves as cofactor.

It catalyses the reaction 5-(2-hydroxyethyl)-4-methylthiazole + ATP = 4-methyl-5-(2-phosphooxyethyl)-thiazole + ADP + H(+). The protein operates within cofactor biosynthesis; thiamine diphosphate biosynthesis; 4-methyl-5-(2-phosphoethyl)-thiazole from 5-(2-hydroxyethyl)-4-methylthiazole: step 1/1. Catalyzes the phosphorylation of the hydroxyl group of 4-methyl-5-beta-hydroxyethylthiazole (THZ). In Thermoanaerobacter sp. (strain X514), this protein is Hydroxyethylthiazole kinase.